A 190-amino-acid chain; its full sequence is FUN14 domain-containing protein 2 (190 aa).

The segment covering 1–13 (METSTQRTGSHLA) has biased composition (polar residues). The tract at residues 1 to 31 (METSTQRTGSHLAQTAAARHSASSRGEAARV) is disordered. Residues 1-81 (METSTQRTGS…GQESGPSAEK (81 aa)) are Cytoplasmic-facing. A phosphoserine mark is found at Ser10 and Ser54. The chain crosses the membrane as a helical span at residues 82–102 (YSVATQLLIGGVTGWCTGFIF). The Mitochondrial intermembrane segment spans residues 103–108 (QKVGKL). A helical transmembrane segment spans residues 109–129 (AATAVGGGFFLLQLANHTGYI). The Cytoplasmic segment spans residues 130 to 165 (KVDWQRVEKDMKKAKEQLKIRKSNQIPTEVKSKAEE). Ser152 bears the Phosphoserine mark. Residues 166–186 (VVSFVKKNVLVTGGFFGGFLL) traverse the membrane as a helical segment. Over 187–190 (GMAS) the chain is Mitochondrial intermembrane.

It belongs to the FUN14 family.

Its subcellular location is the mitochondrion outer membrane. The protein resides in the nucleus. Functionally, binds directly and specifically 1,2-Diacyl-sn-glycero-3-phospho-(1'-myo-inositol-3',4',5'-bisphosphate) (PIP3) leading to the recruitment of PIP3 to mitochondria and may play a role in the regulation of the platelet activation via AKT/GSK3B/cGMP signaling pathways. May act as transcription factor that regulates SREBP1 (isoform SREBP-1C) expression in order to modulate triglyceride (TG) homeostasis in hepatocytes. The polypeptide is FUN14 domain-containing protein 2 (Bos taurus (Bovine)).